The following is a 492-amino-acid chain: KAT8 regulatory NSL complex subunit 2 (492 aa).

K78 is covalently cross-linked (Glycyl lysine isopeptide (Lys-Gly) (interchain with G-Cter in SUMO2)). The segment at 126–182 is disordered; that stretch reads ELGSQTPESSRSEASRILDEDSWSDGEQEPITVDQTWRGDPDSEADSIDSDQEDPLK. Phosphothreonine is present on T131. The segment covering 135–144 has biased composition (basic and acidic residues); it reads SRSEASRILD. Phosphoserine is present on residues S147, S149, S168, S172, and S175. Residues 167 to 178 are compositionally biased toward acidic residues; that stretch reads DSEADSIDSDQE. Positions 308 to 364 are required for interaction with other NSL complex members; it reads DVRCSNQSLPMTRHCLTHICQDTNQVLFKCCQGSEEVPCNKPVPVSLSEDPCCPLHF. The disordered stretch occupies residues 455 to 492; it reads AGDGCRSQGSRNSEKASAPLSQSGLATANGKPEPTSIS.

As to quaternary structure, component of the NSL complex at least composed of KAT8/MOF, KANSL1, KANSL2, KANSL3, MCRS1, PHF20, OGT1/OGT, WDR5 and HCFC1.

It localises to the nucleus. The protein resides in the mitochondrion. Its function is as follows. Non-catalytic component of the NSL histone acetyltransferase complex, a multiprotein complex that mediates histone H4 acetylation at 'Lys-5'- and 'Lys-8' (H4K5ac and H4K8ac) at transcription start sites and promotes transcription initiation. Required for NSL complex stability and for transcription of intraciliary transport genes in both ciliated and non-ciliated cells by regulating histone H4 acetylation at 'Lys-5'- and 'Lys-12' (H4K5ac and H4K12ac). This is necessary for cilium assembly in ciliated cells and for organization of the microtubule cytoskeleton in non-ciliated cells. Required within the NSL complex to maintain nuclear architecture stability by promoting KAT8-mediated acetylation of lamin LMNA. The sequence is that of KAT8 regulatory NSL complex subunit 2 (KANSL2) from Homo sapiens (Human).